We begin with the raw amino-acid sequence, 654 residues long: NADPH-dependent diflavin oxidoreductase 1 (654 aa).

Positions Met1–Pro10 are enriched in low complexity. The tract at residues Met1 to Ser22 is disordered. Residues Ala23–Arg167 form the Flavodoxin-like domain. Residues Ser29–Ala34, Ser76–Gly79, and Leu114–Asn123 each bind FMN. The FAD-binding FR-type domain occupies His235–Ser485. FAD-binding positions include Arg389, Arg419–Ser422, and Gly458–Thr461. Residues Thr500, Ser568 to Arg569, and Lys574 to Gln578 each bind NADP(+). Trp654 contacts FAD.

Belongs to the NADPH-dependent diflavin oxidoreductase NDOR1 family. This sequence in the N-terminal section; belongs to the flavodoxin family. It in the C-terminal section; belongs to the flavoprotein pyridine nucleotide cytochrome reductase family. As to quaternary structure, interacts with dre2; as part of the cytosolic iron-sulfur (Fe-S) protein assembly (CIA) machinery. Requires FAD as cofactor. FMN serves as cofactor.

The protein resides in the cytoplasm. Its subcellular location is the mitochondrion. The catalysed reaction is 2 oxidized [2Fe-2S]-[protein] + NADPH = 2 reduced [2Fe-2S]-[protein] + NADP(+) + H(+). Functionally, NADPH-dependent reductase which is a central component of the cytosolic iron-sulfur (Fe-S) protein assembly (CIA) machinery. Transfers electrons from NADPH via its FAD and FMN prosthetic groups to the [2Fe-2S] cluster of dre2, another key component of the CIA machinery. In turn, this reduced cluster provides electrons for assembly of cytosolic iron-sulfur cluster proteins. Positively controls H(2)O(2)-induced cell death. The polypeptide is NADPH-dependent diflavin oxidoreductase 1 (Emericella nidulans (strain FGSC A4 / ATCC 38163 / CBS 112.46 / NRRL 194 / M139) (Aspergillus nidulans)).